A 265-amino-acid chain; its full sequence is Undecaprenyl-diphosphatase (265 aa).

8 helical membrane-spanning segments follow: residues 1–21 (MDFI…FLPI), 39–61 (QGLA…YFRL), 85–105 (LAWA…MLTE), 115–135 (LIIA…DWAG), 149–169 (ILFI…RSGI), 187–207 (FSFL…ALDL), 218–238 (ALAL…HYFF), and 244–264 (IGML…FYLF).

This sequence belongs to the UppP family.

The protein localises to the cell inner membrane. The catalysed reaction is di-trans,octa-cis-undecaprenyl diphosphate + H2O = di-trans,octa-cis-undecaprenyl phosphate + phosphate + H(+). Functionally, catalyzes the dephosphorylation of undecaprenyl diphosphate (UPP). Confers resistance to bacitracin. The chain is Undecaprenyl-diphosphatase from Nitrosococcus oceani (strain ATCC 19707 / BCRC 17464 / JCM 30415 / NCIMB 11848 / C-107).